The sequence spans 1008 residues: Pre-mRNA-splicing factor SNU114 (1008 aa).

Position 85 is a phosphoserine (serine 85). At threonine 88 the chain carries Phosphothreonine. The 208-residue stretch at 131 to 338 folds into the tr-type G domain; the sequence is ERIINVGVIG…SYYYAHSIPS (208 aa). A G1 region spans residues 140-147; it reads GPLHSGKT. Residue 140–147 participates in GTP binding; sequence GPLHSGKT. The interval 188–192 is G2; sequence GLSIK. Residues 214–217 form a G3 region; it reads DAPG. GTP-binding positions include 214 to 218 and 268 to 271; these read DAPGH and NKLD. A G4 region spans residues 268 to 271; that stretch reads NKLD. The segment at 315 to 317 is G5; sequence STK. Positions 504-536 are disordered; that stretch reads TSQSESRQKRQLHDISKTETSNEDEDEDDETPS. Positions 509 to 520 are enriched in basic and acidic residues; it reads SRQKRQLHDISK. Positions 524–536 are enriched in acidic residues; sequence SNEDEDEDDETPS.

It belongs to the TRAFAC class translation factor GTPase superfamily. Classic translation factor GTPase family. EF-G/EF-2 subfamily. In terms of assembly, belongs to the CWC complex (or CEF1-associated complex), a spliceosome sub-complex reminiscent of a late-stage spliceosome composed of the U2, U5 and U6 snRNAs and at least BUD13, BUD31, BRR2, CDC40, CEF1, CLF1, CUS1, CWC2, CWC15, CWC21, CWC22, CWC23, CWC24, CWC25, CWC27, ECM2, HSH155, IST3, ISY1, LEA1, MSL1, NTC20, PRP8, PRP9, PRP11, PRP19, PRP21, PRP22, PRP45, PRP46, SLU7, SMB1, SMD1, SMD2, SMD3, SMX2, SMX3, SNT309, SNU114, SPP2, SYF1, SYF2, RSE1 and YJU2. Component of the U4/U6-U5 tri-snRNP complex composed of the U4, U6 and U5 snRNAs and at least PRP3, PRP4, PRP6, PRP8, PRP18, PRP31, PRP38, SNU13, SNU23, SNU66, SNU114, SPP381, SMB1, SMD1, SMD2, SMD3, SMX2, SMX3, LSM2, LSM3, LSM4, LSM5, LSM6, LSM7, LSM8, BRR2 and DIB1. Interacts (via C-terminus) with CWC21. Interacts (via N-terminus) with PRP8 (via SCwid domain).

The protein resides in the nucleus. Component of the U5 snRNP complex required for pre-mRNA splicing. Binds GTP. This Saccharomyces cerevisiae (strain ATCC 204508 / S288c) (Baker's yeast) protein is Pre-mRNA-splicing factor SNU114 (SNU114).